A 436-amino-acid chain; its full sequence is GTPase Der (436 aa).

EngA-type G domains are found at residues Pro-4–Glu-167 and Ile-175–Asn-351. Residues Gly-10–Ser-17, Asp-57–Ile-61, Asn-119–Asp-122, Gly-181–Ser-188, Asp-229–Met-233, and Asn-294–Asp-297 contribute to the GTP site. The KH-like domain maps to Lys-352–Lys-436.

The protein belongs to the TRAFAC class TrmE-Era-EngA-EngB-Septin-like GTPase superfamily. EngA (Der) GTPase family. As to quaternary structure, associates with the 50S ribosomal subunit.

In terms of biological role, GTPase that plays an essential role in the late steps of ribosome biogenesis. In Streptococcus pyogenes serotype M3 (strain ATCC BAA-595 / MGAS315), this protein is GTPase Der.